The primary structure comprises 447 residues: GTPase Der (447 aa).

EngA-type G domains follow at residues 4 to 165 and 180 to 357; these read KIIT…SIKE and LQIV…KIWN. Residues 10 to 17, 57 to 61, 119 to 122, 186 to 193, 233 to 237, and 298 to 301 each bind GTP; these read GRPNVGKS, DTPGL, NKCE, GRPNAGKS, DTAGL, and NKWD. One can recognise a KH-like domain in the interval 358-443; sequence KKITTGKLNE…PIRFTYVKNK (86 aa).

Belongs to the TRAFAC class TrmE-Era-EngA-EngB-Septin-like GTPase superfamily. EngA (Der) GTPase family. In terms of assembly, associates with the 50S ribosomal subunit.

Functionally, GTPase that plays an essential role in the late steps of ribosome biogenesis. This is GTPase Der from Rickettsia typhi (strain ATCC VR-144 / Wilmington).